A 143-amino-acid polypeptide reads, in one-letter code: Deoxyuridine 5'-triphosphate nucleotidohydrolase (143 aa).

Substrate is bound by residues arginine 63–glycine 65, asparagine 76, threonine 80–aspartate 82, and lysine 90.

Belongs to the dUTPase family. Requires Mg(2+) as cofactor.

It carries out the reaction dUTP + H2O = dUMP + diphosphate + H(+). The protein operates within pyrimidine metabolism; dUMP biosynthesis; dUMP from dCTP (dUTP route): step 2/2. This enzyme is involved in nucleotide metabolism: it produces dUMP, the immediate precursor of thymidine nucleotides and it decreases the intracellular concentration of dUTP so that uracil cannot be incorporated into DNA. The chain is Deoxyuridine 5'-triphosphate nucleotidohydrolase from Finegoldia magna (strain ATCC 29328 / DSM 20472 / WAL 2508) (Peptostreptococcus magnus).